A 105-amino-acid chain; its full sequence is Vacuolar ATPase assembly integral membrane protein VMA21 homolog (105 aa).

Residues 1-26 are disordered; that stretch reads MSTKNKKAAGGNGGAPKQTRQQSHDS. Over 1–36 the chain is Cytoplasmic; the sequence is MSTKNKKAAGGNGGAPKQTRQQSHDSQDYSSFKTVL. A helical membrane pass occupies residues 37-57; it reads FYCMLIVFLPVLTFFVLKGFV. Residues 58-68 lie on the Lumenal side of the membrane; that stretch reads LDQFLDISEVK. A helical transmembrane segment spans residues 69-89; it reads VNIASAVGAVVALHIALGLYI. Over 90-105 the chain is Cytoplasmic; sequence YRAYFGAPGSKGSKTD.

This sequence belongs to the VMA21 family.

It localises to the endoplasmic reticulum membrane. It is found in the endoplasmic reticulum-Golgi intermediate compartment membrane. The protein localises to the cytoplasmic vesicle. The protein resides in the COPII-coated vesicle membrane. Its function is as follows. Required for the assembly of the V0 complex of the vacuolar ATPase (V-ATPase) in the endoplasmic reticulum. The chain is Vacuolar ATPase assembly integral membrane protein VMA21 homolog from Drosophila simulans (Fruit fly).